Reading from the N-terminus, the 283-residue chain is Non-selective voltage-gated ion channel VDAC3 (283 aa).

C2 carries the post-translational modification N-acetylcysteine. T4 bears the Phosphothreonine mark. An N6-acetyllysine mark is found at K12, K15, and K20. 2 beta stranded membrane-spanning segments follow: residues 26–35 (MVKIDLRTKS) and 39–47 (VEFSTSGHA). K53 participates in a covalent cross-link: Glycyl lysine isopeptide (Lys-Gly) (interchain with G-Cter in ubiquitin). 3 beta stranded membrane passes run 54–64 (ASGNLETKYKI), 69–76 (LTFTQKWN), and 80–89 (TLGTEISWEN). K90 is subject to N6-acetyllysine. Residues 95–104 (LKLTLDTIFV) traverse the membrane as a beta stranded segment. Residues K109 and K110 each participate in a glycyl lysine isopeptide (Lys-Gly) (interchain with G-Cter in ubiquitin) cross-link. A run of 10 beta stranded transmembrane segments spans residues 111 to 120 (SGKLKASYKR), 123 to 130 (FSLGSNVD), 137 to 145 (TIYGWAVLA), 150 to 158 (LAGYQMSFD), 163 to 175 (KLSQ…GYKA), 178 to 185 (FQLHTHVN), 189 to 198 (EFGGSIYQKV), 202 to 211 (IETSINLAWT), 218 to 227 (RFGIAAKYKL), and 231 to 238 (TSLSAKVN). A Phosphoserine modification is found at S241. NAD(+)-binding positions include 242 to 244 (LIG) and 260 to 264 (SALID). 2 beta stranded membrane passes run 242-251 (LIGLGYTQTL) and 254-263 (GVKLTLSALI). The residue at position 266 (K266) is an N6-acetyllysine; alternate. Residue K266 forms a Glycyl lysine isopeptide (Lys-Gly) (interchain with G-Cter in ubiquitin); alternate linkage. A beta stranded membrane pass occupies residues 273-282 (HKVGLGFELE).

The protein belongs to the eukaryotic mitochondrial porin family. Interacts with ARMC12 in a TBC1D21-dependent manner. Interacts with MISFA. Ubiquitinated by PRKN during mitophagy, leading to its degradation and enhancement of mitophagy. Deubiquitinated by USP30.

Its subcellular location is the mitochondrion outer membrane. The protein localises to the membrane. It carries out the reaction chloride(in) = chloride(out). The catalysed reaction is K(+)(in) = K(+)(out). Its function is as follows. Non-selective voltage-gated ion channel that mediates the transport of anions and cations through the mitochondrion outer membrane and plasma membrane. Forms a high-conducting channel with a stable open state and a voltage-induced closure with a mild preference for anions over cations. Involved in male fertility and sperm mitochondrial sheath formation. This is Non-selective voltage-gated ion channel VDAC3 from Bos taurus (Bovine).